Here is a 748-residue protein sequence, read N- to C-terminus: Meprin A subunit alpha (748 aa).

The N-terminal stretch at 1–20 (MLWTLPVCLLSLSFSAHIAA) is a signal peptide. A propeptide spanning residues 21–66 (VSIQHLSTGHDHDDVDVGEQQKDISEINSAAGLNLFQGDILLPRTR) is cleaved from the precursor. One can recognise a Peptidase M12A domain in the interval 67-261 (NALRDPSSRW…TRLNRMYNCT (195 aa)). Over 67 to 719 (NALRDPSSRW…RCQAMHVHGS (653 aa)) the chain is Extracellular. 3 cysteine pairs are disulfide-bonded: C108–C260, C129–C148, and C270–C432. An N-linked (GlcNAc...) asparagine glycan is attached at N141. H156 serves as a coordination point for Zn(2+). E157 is an active-site residue. Zn(2+) contacts are provided by H160 and H166. N-linked (GlcNAc...) asparagine glycans are attached at residues N223, N259, N319, N441, and N542. The MAM domain occupies 265–434 (TLLDHCAFEK…ITLTETPCPT (170 aa)). One can recognise an MATH domain in the interval 435 to 596 (GVWTIRNISQ…DDTLIIFVDF (162 aa)). The interval 641 to 668 (LPRRLDQRQPSRPKRSVENTGPMEDHNW) is disordered. The EGF-like domain maps to 672–712 (FRDPCDPNPCQNEGTCVNVKGMASCRCVSGHAFFYTGERCQ). Cystine bridges form between C676/C687, C681/C696, and C698/C711. A helical membrane pass occupies residues 720–739 (LLGLLIGCITALIFLTFITF). The Cytoplasmic segment spans residues 740–748 (SNTYQKLRQ).

Homotetramer consisting of disulfide-linked alpha subunits, homooligomer consisting of disulfide-linked alpha subunit homodimers, or heterotetramer of two alpha and two beta subunits formed by non-covalent association of two disulfide-linked heterodimers. Interacts with MBL2 through its carbohydrate moiety. This interaction may inhibit its catalytic activity. Zn(2+) is required as a cofactor. Post-translationally, N-glycosylated; contains GlcNAc, galactose, mannose and a small amount of fucose. As to expression, colocalized with E-24.11 in proximal tubules of juxtamedullary nephrons.

The protein resides in the membrane. It catalyses the reaction Hydrolysis of protein and peptide substrates preferentially on carboxyl side of hydrophobic residues.. Inhibited by actinonin. This Rattus norvegicus (Rat) protein is Meprin A subunit alpha (Mep1a).